A 79-amino-acid polypeptide reads, in one-letter code: Putative Fis-like DNA-binding protein (79 aa).

The segment at residues 55-74 is a DNA-binding region (H-T-H motif); sequence QSKASVMLGLNRNTLRKKLI.

It belongs to the transcriptional regulatory Fis family.

The protein is Putative Fis-like DNA-binding protein of Neisseria meningitidis serogroup A / serotype 4A (strain DSM 15465 / Z2491).